We begin with the raw amino-acid sequence, 227 residues long: Glutathione S-transferase U18 (227 aa).

The GST N-terminal domain maps to 4 to 83; that stretch reads EDVKLIGSWA…YIDEAWNSSG (80 aa). Glutathione contacts are provided by residues 14 to 15, 40 to 41, 54 to 55, and 67 to 68; these read SV, SK, KM, and ES. Residues 90-221 form the GST C-terminal domain; it reads HPYDRAIARF…TKLAEFARKL (132 aa).

The protein belongs to the GST superfamily. Tau family.

It localises to the cytoplasm. The protein resides in the cytosol. It catalyses the reaction RX + glutathione = an S-substituted glutathione + a halide anion + H(+). Its function is as follows. May be involved in the conjugation of reduced glutathione to a wide number of exogenous and endogenous hydrophobic electrophiles and have a detoxification role against certain herbicides. The polypeptide is Glutathione S-transferase U18 (GSTU18) (Arabidopsis thaliana (Mouse-ear cress)).